An 817-amino-acid chain; its full sequence is DNA mismatch repair protein MutS (817 aa).

604-611 (GPNMSGKS) lines the ATP pocket.

This sequence belongs to the DNA mismatch repair MutS family.

Functionally, this protein is involved in the repair of mismatches in DNA. It is possible that it carries out the mismatch recognition step. This protein has a weak ATPase activity. This is DNA mismatch repair protein MutS from Petrotoga mobilis (strain DSM 10674 / SJ95).